The sequence spans 84 residues: Large ribosomal subunit protein bL27 (84 aa).

The tract at residues 1–24 (MAHKKGGGSSKNGRDSNSQRLGVK) is disordered.

The protein belongs to the bacterial ribosomal protein bL27 family.

This is Large ribosomal subunit protein bL27 from Leptospira borgpetersenii serovar Hardjo-bovis (strain JB197).